A 574-amino-acid chain; its full sequence is 5'-nucleotidase (574 aa).

The N-terminal stretch at 1–26 (MCPRAARAPATLLLALGAVLWPAAGA) is a signal peptide. Zn(2+) is bound by residues aspartate 36 and histidine 38. A disulfide bridge links cysteine 51 with cysteine 57. A glycan (N-linked (GlcNAc...) asparagine) is linked at asparagine 53. Zn(2+) is bound by residues aspartate 85, asparagine 117, histidine 220, and histidine 243. Residues asparagine 311 and asparagine 333 are each glycosylated (N-linked (GlcNAc...) asparagine). Disulfide bonds link cysteine 353–cysteine 358 and cysteine 365–cysteine 387. Residue arginine 354 coordinates AMP. Arginine 354 serves as a coordination point for IMP. Residues asparagine 390 and arginine 395 each coordinate AMP. Residues asparagine 390 and arginine 395 each contribute to the IMP site. Asparagine 403 is a glycosylation site (N-linked (GlcNAc...) asparagine). Phenylalanine 417 is a binding site for AMP. Phenylalanine 417 contributes to the IMP binding site. Cysteine 476 and cysteine 479 are oxidised to a cystine. AMP is bound by residues phenylalanine 500 and aspartate 506. IMP-binding residues include phenylalanine 500 and aspartate 506. The GPI-anchor amidated serine moiety is linked to residue serine 549. Residues 550–574 (TGSHCHGSFSLIFLSLWAVIFVLYQ) constitute a propeptide, removed in mature form.

Belongs to the 5'-nucleotidase family. In terms of assembly, homodimer. Zn(2+) is required as a cofactor.

It localises to the cell membrane. The enzyme catalyses a ribonucleoside 5'-phosphate + H2O = a ribonucleoside + phosphate. It catalyses the reaction a 2'-deoxyribonucleoside 5'-phosphate + H2O = a 2'-deoxyribonucleoside + phosphate. It carries out the reaction dTMP + H2O = thymidine + phosphate. The catalysed reaction is CMP + H2O = cytidine + phosphate. The enzyme catalyses IMP + H2O = inosine + phosphate. It catalyses the reaction AMP + H2O = adenosine + phosphate. It carries out the reaction GMP + H2O = guanosine + phosphate. The catalysed reaction is UMP + H2O = uridine + phosphate. The enzyme catalyses dAMP + H2O = 2'-deoxyadenosine + phosphate. It catalyses the reaction dCMP + H2O = 2'-deoxycytidine + phosphate. With respect to regulation, inhibited by adenosine 5'-(alpha,beta-methylene)-diphosphate (AMPCP). In terms of biological role, catalyzes the hydrolysis of nucleotide monophosphates, releasing inorganic phosphate and the corresponding nucleoside, with AMP being the preferred substrate. Shows a preference for ribonucleotide monophosphates over their equivalent deoxyribose forms. Other substrates include IMP, UMP, GMP, CMP, dAMP, dCMP, dTMP, NAD and NMN. This is 5'-nucleotidase (NT5E) from Homo sapiens (Human).